We begin with the raw amino-acid sequence, 239 residues long: MDTIGLFSVEAEHLFVEWVKKCIKKGDLTLFETLFNADPWIVNRCNKNKITVFMLICIYGRLDFLRFLFKQESYPGEIVNHYRRDKDGNSAWHYLAEKNNHLLLEEVLDYFGKNGIRVCFPNFNGVTPIMKAAMRGRTLSVLSLLKYGANPNRKDYLKGFTTWDWAVFTGHADLVKTLNKGYQKPLFMHFPLYKLDVFHRRFKKKPKIIITGCEDNVYEKLPEQNSNFLCVKKLNKYGK.

ANK repeat units lie at residues 48-77, 87-116, 124-153, and 158-187; these read NKIT…YPGE, DGNS…KNGI, NGVT…NPNR, and KGFT…KPLF. A Nuclear localization signal motif is present at residues 81-87; that stretch reads HYRRDKD. Positions 203–214 match the Nuclear localization signal motif; the sequence is KKKPKIIITGCE. The short motif at 206-213 is the PxIxITxC motif; Interaction with host PPP3CA element; it reads PKIIITGC. Positions 228–231 match the FLCV motif motif; sequence FLCV.

The protein belongs to the asfivirus A238L family. In terms of assembly, interacts with host PPIA. Interacts with host PPP3CA/Calcineurin. Interacts with host RELA/p65; interaction of the 32 kDa form with host RELA results in the formation of a stable complex with NF-kappa-B. Interacts with host PPP3R1. Interacts with host EP300; this interaction inhibits the association of host EP300 with host RELA, JUN and NFATC2. Post-translationally, the protein exists in a 28 kDa and a 32 kDa form, probably due to post-translational modifications which are neither phosphorylation, nor sumoylation.

It localises to the host nucleus. Its subcellular location is the host cytoplasm. Functionally, ikB-like protein that inhibits the binding of NF-kappa-B to DNA, thereby downregulating pro-inflammatory cytokine production. Forms a heterodimer with the NF-kappa-B subunit RELA/p65 and prevents the activation of the NF-kappa-B transcription factor. Inhibits calcineurin function, which is required for the induction of nuclear factor of activated T cells (NFAT)-dependent immune response genes. Prevents the binding of substrates to calcineurin without affecting the phosphatase activity. Does not contain the serine residues that are phosphorylated by host IkB kinase and thus is not degraded following stimulation of the NFkB pathway. The protein is IkB-like protein (A238L) of Ornithodoros (relapsing fever ticks).